A 404-amino-acid chain; its full sequence is Keratin, type I cuticular Ha3-I (404 aa).

The head stretch occupies residues 1-56; the sequence is MPYNCCLPAMSCRTSCSSRPCVPPSCHGCTLPGACNIPANVGNCNWFCEGSFNGNE. Residues 56 to 367 enclose the IF rod domain; it reads EKETMQFLND…GLLESEDCKL (312 aa). The interval 57–91 is coil 1A; the sequence is KETMQFLNDRLASYMEKVRQLERENAELECRIQER. The segment at 92–102 is linker 1; that stretch reads NQQQDPLVCPA. The tract at residues 103–203 is coil 1B; it reads YQAYFRTIEE…HEQEVNTLRC (101 aa). The linker 12 stretch occupies residues 204 to 219; sequence QLGDRLNVEVDAAPTV. The interval 220-363 is coil 2; the sequence is DLNRVLNETR…NTYRGLLESE (144 aa). The interval 364–404 is tail; sequence DCKLPCNPCATTNACDKPIGPCVPNPCVTRPRCGPCNTFVR.

Belongs to the intermediate filament family.

In Mus musculus (Mouse), this protein is Keratin, type I cuticular Ha3-I.